Reading from the N-terminus, the 277-residue chain is Co-chaperone protein DjlA (277 aa).

The Periplasmic portion of the chain corresponds to 1–4 (MWGK). A helical membrane pass occupies residues 5-28 (ILGAFFGFLLGGPFGLLLGLFLGH). Over 29 to 277 (KFDKARRNVY…DMIRKEKGFK (249 aa)) the chain is Cytoplasmic. Residues 211 to 277 (DAYEVLGVTE…DMIRKEKGFK (67 aa)) form the J domain.

As to quaternary structure, homodimer.

It localises to the cell inner membrane. Its function is as follows. Regulatory DnaK co-chaperone. Direct interaction between DnaK and DjlA is needed for the induction of the wcaABCDE operon, involved in the synthesis of a colanic acid polysaccharide capsule, possibly through activation of the RcsB/RcsC phosphotransfer signaling pathway. The colanic acid capsule may help the bacterium survive conditions outside the host. The protein is Co-chaperone protein DjlA of Photobacterium profundum (strain SS9).